The sequence spans 644 residues: 2-isopropylmalate synthase (644 aa).

A disordered region spans residues 1–40 (MTTSESPDAYTESFGAHTIVKPAGPPRVGQPSWNPQRASS). The segment covering 31 to 40 (PSWNPQRASS) has biased composition (polar residues). Residues 72-346 (PLWCAVDLRD…DPQIDFSNID (275 aa)) enclose the Pyruvate carboxyltransferase domain. Mg(2+)-binding residues include Asp-81, His-285, His-287, and Asn-321. The regulatory domain stretch occupies residues 491-644 (PVRPLERIRQ…VVSAVNRAAR (154 aa)). Residues 575 to 593 (VTIASPAQPGEAGRHASDP) form a VNTR1 repeat. The disordered stretch occupies residues 581–612 (AQPGEAGRHASDPVTIASPAQPGEAGRHASDP). A VNTR2 repeat occupies 594–612 (VTIASPAQPGEAGRHASDP).

Belongs to the alpha-IPM synthase/homocitrate synthase family. LeuA type 2 subfamily. In terms of assembly, homodimer. The cofactor is Mg(2+).

The protein resides in the cytoplasm. It carries out the reaction 3-methyl-2-oxobutanoate + acetyl-CoA + H2O = (2S)-2-isopropylmalate + CoA + H(+). It functions in the pathway amino-acid biosynthesis; L-leucine biosynthesis; L-leucine from 3-methyl-2-oxobutanoate: step 1/4. In terms of biological role, catalyzes the condensation of the acetyl group of acetyl-CoA with 3-methyl-2-oxobutanoate (2-ketoisovalerate) to form 3-carboxy-3-hydroxy-4-methylpentanoate (2-isopropylmalate). This chain is 2-isopropylmalate synthase, found in Mycobacterium tuberculosis (strain CDC 1551 / Oshkosh).